A 337-amino-acid chain; its full sequence is PHD finger protein 11 (337 aa).

Residues 25–61 (KRTCALCPEGHEWSQIYFSPSGNIVAHENCLLYSSGL) form a C2HC pre-PHD-type zinc finger. The PHD-type zinc-finger motif lies at 91–143 (LKCSFCNKGGATVGCDLWFCKKSYHYVCAKKDQAILQVDGNHGTYKLFCPEHS). 2 disordered regions span residues 145–196 (EQEE…HGHT) and 301–337 (GDLD…GDSL). Positions 187-196 (HMTEEPHGHT) are enriched in basic and acidic residues. 2 stretches are compositionally biased toward polar residues: residues 301-312 (GDLDCSSSTSGS) and 323-337 (SQES…GDSL).

Interacts with BRCA1 and RELA.

The protein resides in the nucleus. In terms of biological role, positive regulator of Th1-type cytokine gene expression. In Mus musculus (Mouse), this protein is PHD finger protein 11 (Phf11).